A 471-amino-acid polypeptide reads, in one-letter code: Arginine biosynthesis bifunctional protein ArgJ, mitochondrial (471 aa).

The N-terminal 33 residues, 1–33, are a transit peptide targeting the mitochondrion; that stretch reads MAMAGCNGFFLHQLRQPRLQLARQLGRTPSRAY. Positions 201, 230, 241, 327, 466, and 471 each coordinate substrate. Threonine 241 functions as the Nucleophile in the catalytic mechanism.

This sequence belongs to the ArgJ family. In terms of assembly, heterodimer of an alpha and a beta chain. The alpha and beta chains are autoproteolytically processed from a single precursor protein within the mitochondrion.

It localises to the mitochondrion matrix. It catalyses the reaction N(2)-acetyl-L-ornithine + L-glutamate = N-acetyl-L-glutamate + L-ornithine. The catalysed reaction is L-glutamate + acetyl-CoA = N-acetyl-L-glutamate + CoA + H(+). It functions in the pathway amino-acid biosynthesis; L-arginine biosynthesis; L-ornithine and N-acetyl-L-glutamate from L-glutamate and N(2)-acetyl-L-ornithine (cyclic): step 1/1. It participates in amino-acid biosynthesis; L-arginine biosynthesis; N(2)-acetyl-L-ornithine from L-glutamate: step 1/4. Functionally, catalyzes two activities which are involved in the cyclic version of arginine biosynthesis: the synthesis of acetylglutamate from glutamate and acetyl-CoA, and of ornithine by transacetylation between acetylornithine and glutamate. The polypeptide is Arginine biosynthesis bifunctional protein ArgJ, mitochondrial (Chaetomium globosum (strain ATCC 6205 / CBS 148.51 / DSM 1962 / NBRC 6347 / NRRL 1970) (Soil fungus)).